The sequence spans 286 residues: Eukaryotic translation initiation factor 3 subunit J (286 aa).

Disordered regions lie at residues 1 to 35 (MSWDDEDFDIPSNSKQAAASWEEEGNDEPLLDSWD), 141 to 162 (AASGPTPARLTKDTPIDTHPLF), and 229 to 258 (KAERQARLKKAGGTATGGAGKKKAKPAVKT). The span at 21–35 (WEEEGNDEPLLDSWD) shows a compositional bias: acidic residues. Positions 35–75 (DIDEEEVARKKKEEEAKKKAEKEALKKKQEESKAKKLSKNK) form a coiled coil.

This sequence belongs to the eIF-3 subunit J family. In terms of assembly, component of the eukaryotic translation initiation factor 3 (eIF-3) complex.

It is found in the cytoplasm. Its function is as follows. Component of the eukaryotic translation initiation factor 3 (eIF-3) complex, which is involved in protein synthesis of a specialized repertoire of mRNAs and, together with other initiation factors, stimulates binding of mRNA and methionyl-tRNAi to the 40S ribosome. The eIF-3 complex specifically targets and initiates translation of a subset of mRNAs involved in cell proliferation. The chain is Eukaryotic translation initiation factor 3 subunit J from Debaryomyces hansenii (strain ATCC 36239 / CBS 767 / BCRC 21394 / JCM 1990 / NBRC 0083 / IGC 2968) (Yeast).